Consider the following 201-residue polypeptide: Recombination protein RecR (201 aa).

The C4-type zinc finger occupies 60–75 (CHECGNVDTSDPCTIC). The Toprim domain occupies 83–178 (SILVVVEDVS…KVTKLAHGVP (96 aa)).

Belongs to the RecR family.

In terms of biological role, may play a role in DNA repair. It seems to be involved in an RecBC-independent recombinational process of DNA repair. It may act with RecF and RecO. The sequence is that of Recombination protein RecR from Methylobacterium nodulans (strain LMG 21967 / CNCM I-2342 / ORS 2060).